The primary structure comprises 178 residues: Large ribosomal subunit protein bL25 (178 aa).

Belongs to the bacterial ribosomal protein bL25 family. CTC subfamily. As to quaternary structure, part of the 50S ribosomal subunit; part of the 5S rRNA/L5/L18/L25 subcomplex. Contacts the 5S rRNA. Binds to the 5S rRNA independently of L5 and L18.

This is one of the proteins that binds to the 5S RNA in the ribosome where it forms part of the central protuberance. The protein is Large ribosomal subunit protein bL25 of Helicobacter pylori (strain ATCC 700392 / 26695) (Campylobacter pylori).